The primary structure comprises 67 residues: Alpha-conotoxin-like Qc1.1a (67 aa).

Residues 1–21 form the signal peptide; it reads MGMRMMFTMFLLVVLAITVVS. Positions 22 to 46 are excised as a propeptide; that stretch reads FTSDHASDGRNTAANDKASNLMALR. Disulfide bonds link cysteine 49/cysteine 55 and cysteine 50/cysteine 63. Positions 51 to 53 are lacks the Ser-Xaa-Pro motif that is crucial for potent interaction with nAChR; it reads PDP.

It belongs to the conotoxin A superfamily. In terms of tissue distribution, expressed by the venom duct.

The protein localises to the secreted. Its function is as follows. Alpha-conotoxins act on postsynaptic membranes, they bind to the nicotinic acetylcholine receptors (nAChR) and thus inhibit them. Has possibly a distinct nAChR binding mode from other alpha-conotoxins, due to a different three residue motif (lacks the Ser-Xaa-Pro motif). This chain is Alpha-conotoxin-like Qc1.1a, found in Conus quercinus (Oak cone).